The following is a 199-amino-acid chain: Zinc finger matrin-type protein 2 (199 aa).

A2 bears the N-acetylalanine mark. Glycyl lysine isopeptide (Lys-Gly) (interchain with G-Cter in SUMO2) cross-links involve residues K8, K36, K39, K45, K55, K61, K64, K70, K102, and K123. The tract at residues 27-46 is disordered; the sequence is KRLTEEREKKDGKPVQPVKR. Residues 80-104 form a Matrin-type zinc finger; that stretch reads YYCNVCDCVVKDSINFLDHINGKKH. The span at 150–173 shows a compositional bias: basic and acidic residues; sequence REEEEKAKAYKKEKQKEKKRRAEE. The interval 150 to 175 is disordered; it reads REEEEKAKAYKKEKQKEKKRRAEEDL.

Component of the spliceosome B complex.

The protein localises to the nucleus. Involved in pre-mRNA splicing as a component of the spliceosome. This is Zinc finger matrin-type protein 2 (ZMAT2) from Homo sapiens (Human).